A 110-amino-acid chain; its full sequence is Large ribosomal subunit protein uL22 (110 aa).

Belongs to the universal ribosomal protein uL22 family. In terms of assembly, part of the 50S ribosomal subunit.

Functionally, this protein binds specifically to 23S rRNA; its binding is stimulated by other ribosomal proteins, e.g. L4, L17, and L20. It is important during the early stages of 50S assembly. It makes multiple contacts with different domains of the 23S rRNA in the assembled 50S subunit and ribosome. The globular domain of the protein is located near the polypeptide exit tunnel on the outside of the subunit, while an extended beta-hairpin is found that lines the wall of the exit tunnel in the center of the 70S ribosome. The protein is Large ribosomal subunit protein uL22 of Klebsiella pneumoniae (strain 342).